A 426-amino-acid polypeptide reads, in one-letter code: Phosphoribosylamine--glycine ligase (426 aa).

The 208-residue stretch at 113–320 folds into the ATP-grasp domain; the sequence is KSLMTEAKIP…LLELLYRAST (208 aa). 139-200 is an ATP binding site; the sequence is LESKSIPIVI…EEFMEGQEAS (62 aa). Mg(2+) is bound by residues glutamate 290 and asparagine 292.

It belongs to the GARS family. Mg(2+) is required as a cofactor. Requires Mn(2+) as cofactor.

The enzyme catalyses 5-phospho-beta-D-ribosylamine + glycine + ATP = N(1)-(5-phospho-beta-D-ribosyl)glycinamide + ADP + phosphate + H(+). It functions in the pathway purine metabolism; IMP biosynthesis via de novo pathway; N(1)-(5-phospho-D-ribosyl)glycinamide from 5-phospho-alpha-D-ribose 1-diphosphate: step 2/2. The polypeptide is Phosphoribosylamine--glycine ligase (Leptospira interrogans serogroup Icterohaemorrhagiae serovar copenhageni (strain Fiocruz L1-130)).